Here is a 304-residue protein sequence, read N- to C-terminus: tRNA uridine(34) hydroxylase (304 aa).

Positions 124–219 (QDEETLLIDT…YLETIPKEDS (96 aa)) constitute a Rhodanese domain. Cys-179 (cysteine persulfide intermediate) is an active-site residue.

The protein belongs to the TrhO family.

The catalysed reaction is uridine(34) in tRNA + AH2 + O2 = 5-hydroxyuridine(34) in tRNA + A + H2O. In terms of biological role, catalyzes oxygen-dependent 5-hydroxyuridine (ho5U) modification at position 34 in tRNAs. The sequence is that of tRNA uridine(34) hydroxylase from Bartonella henselae (strain ATCC 49882 / DSM 28221 / CCUG 30454 / Houston 1) (Rochalimaea henselae).